The primary structure comprises 337 residues: Ketol-acid reductoisomerase (NADP(+)) (337 aa).

One can recognise a KARI N-terminal Rossmann domain in the interval 3-183 (VEMFYDDDAD…GGARAGVIKT (181 aa)). NADP(+) contacts are provided by residues 26–29 (YGSQ), Lys-49, Ser-52, Ser-54, and 84–87 (DTAQ). His-109 is a catalytic residue. Gly-135 contributes to the NADP(+) binding site. The KARI C-terminal knotted domain occupies 184 to 329 (TFKEETETDL…KKLRDLMSWV (146 aa)). Residues Asp-192, Glu-196, Glu-228, and Glu-232 each contribute to the Mg(2+) site. Ser-253 is a binding site for substrate.

The protein belongs to the ketol-acid reductoisomerase family. It depends on Mg(2+) as a cofactor.

It catalyses the reaction (2R)-2,3-dihydroxy-3-methylbutanoate + NADP(+) = (2S)-2-acetolactate + NADPH + H(+). The enzyme catalyses (2R,3R)-2,3-dihydroxy-3-methylpentanoate + NADP(+) = (S)-2-ethyl-2-hydroxy-3-oxobutanoate + NADPH + H(+). It participates in amino-acid biosynthesis; L-isoleucine biosynthesis; L-isoleucine from 2-oxobutanoate: step 2/4. The protein operates within amino-acid biosynthesis; L-valine biosynthesis; L-valine from pyruvate: step 2/4. Its function is as follows. Involved in the biosynthesis of branched-chain amino acids (BCAA). Catalyzes an alkyl-migration followed by a ketol-acid reduction of (S)-2-acetolactate (S2AL) to yield (R)-2,3-dihydroxy-isovalerate. In the isomerase reaction, S2AL is rearranged via a Mg-dependent methyl migration to produce 3-hydroxy-3-methyl-2-ketobutyrate (HMKB). In the reductase reaction, this 2-ketoacid undergoes a metal-dependent reduction by NADPH to yield (R)-2,3-dihydroxy-isovalerate. This Mycolicibacterium smegmatis (strain ATCC 700084 / mc(2)155) (Mycobacterium smegmatis) protein is Ketol-acid reductoisomerase (NADP(+)).